A 572-amino-acid polypeptide reads, in one-letter code: 2-succinyl-5-enolpyruvyl-6-hydroxy-3-cyclohexene-1-carboxylate synthase (572 aa).

This sequence belongs to the TPP enzyme family. MenD subfamily. As to quaternary structure, homodimer. It depends on Mg(2+) as a cofactor. Requires Mn(2+) as cofactor. The cofactor is thiamine diphosphate.

The enzyme catalyses isochorismate + 2-oxoglutarate + H(+) = 5-enolpyruvoyl-6-hydroxy-2-succinyl-cyclohex-3-ene-1-carboxylate + CO2. It participates in quinol/quinone metabolism; 1,4-dihydroxy-2-naphthoate biosynthesis; 1,4-dihydroxy-2-naphthoate from chorismate: step 2/7. The protein operates within quinol/quinone metabolism; menaquinone biosynthesis. In terms of biological role, catalyzes the thiamine diphosphate-dependent decarboxylation of 2-oxoglutarate and the subsequent addition of the resulting succinic semialdehyde-thiamine pyrophosphate anion to isochorismate to yield 2-succinyl-5-enolpyruvyl-6-hydroxy-3-cyclohexene-1-carboxylate (SEPHCHC). This chain is 2-succinyl-5-enolpyruvyl-6-hydroxy-3-cyclohexene-1-carboxylate synthase, found in Aeromonas salmonicida (strain A449).